The following is a 360-amino-acid chain: MRLLEKLWGQKPSRKSDKKKNGTSNYPYAVTRVRAMKSKLLPKESYPRLLNMGIDGITRFIQESEYKNDVNELAMKYSGGDLAEHALNRNLALTYDKLVRITGGELNYLVVAYLKRYDIWNIKTLLRGKIYNASAEDIMESLIAAGEFTYTSMSELAAKATYKEIIEALKYSEYYPLLQKFDGTNLAYIENELDKMYYTGLFGAIGKPRSKDRKLFLKVVRLEVDVKNLINLFRLKKAGVMQLDEIMPLMIEGGLELKPEKLATLPYDEFVNELQRTQYWDVISGVTSSDMTSLTTLESRLTRYYLESSTVLSHVSPISVAPILDYIIHKHNEATNLRIIFRGKETGLSDELIKDQLVVI.

The tract at residues 1–25 is disordered; sequence MRLLEKLWGQKPSRKSDKKKNGTSN.

This sequence belongs to the V-ATPase V0D/AC39 subunit family. As to quaternary structure, has multiple subunits with at least A(3), B(3), C, D, E, F, H, I and proteolipid K(x).

The protein localises to the cell membrane. Component of the A-type ATP synthase that produces ATP from ADP in the presence of a proton gradient across the membrane. This Methanosarcina barkeri (strain Fusaro / DSM 804) protein is A-type ATP synthase subunit C.